The sequence spans 1273 residues: Ribulose bisphosphate carboxylase small subunit, chloroplastic (1273 aa).

A chloroplast-targeting transit peptide spans 1–134 (MPFDRQPLLS…AVLPFTSEKD (134 aa)). 7 propeptides span residues 269–278 (GMAAMTGEKD), 412–421 (GMAAMTGEKD), 556–565 (GMAAMTGEKD), 699–708 (GMAAMTGEKD), 844–853 (GMAAMTGEKE), 987–996 (GMAAMTGEKD), and 1131–1140 (GMAAMTGEKE).

This sequence belongs to the RuBisCO small chain family. As to quaternary structure, heterohexadecamer of 8 large and 8 small subunits. Eight small subunits are processed from a large polyprotein. All start with the same sequence but there is more heterogeneity at the C-terminus.

The protein resides in the plastid. It localises to the chloroplast. RuBisCO catalyzes two reactions: the carboxylation of D-ribulose 1,5-bisphosphate, the primary event in carbon dioxide fixation, as well as the oxidative fragmentation of the pentose substrate. Both reactions occur simultaneously and in competition at the same active site. Although the small subunit is not catalytic it is essential for maximal activity. This chain is Ribulose bisphosphate carboxylase small subunit, chloroplastic, found in Euglena gracilis.